A 479-amino-acid chain; its full sequence is Ribosomal lysine N-methyltransferase 2 (479 aa).

Residues 22–325 (PNISICESPE…INEELFLNYG (304 aa)) enclose the SET domain. Tyrosine 324 serves as a coordination point for S-adenosyl-L-methionine.

It belongs to the class V-like SAM-binding methyltransferase superfamily. RKM2 family.

In terms of biological role, S-adenosyl-L-methionine-dependent protein-lysine N-methyltransferase that trimethylates 60S ribosomal protein L12 (RPL12A and RPL12B) at 'Lys-4' and 'Lys-11'. In Saccharomyces cerevisiae (strain ATCC 204508 / S288c) (Baker's yeast), this protein is Ribosomal lysine N-methyltransferase 2.